Reading from the N-terminus, the 24-residue chain is Brevinin-1Bf (24 aa).

C18 and C24 are oxidised to a cystine.

In terms of tissue distribution, expressed by the skin glands.

Its subcellular location is the secreted. Functionally, antibacterial activity against Gram-positive bacterium S.aureus and Gram-negative bacterium E.coli. The protein is Brevinin-1Bf of Lithobates berlandieri (Rio Grande leopard frog).